A 545-amino-acid chain; its full sequence is MAKEIKFDMESRDLLKKGVDALANAVKVTLGPKGRNVILSKTYGAPHITKDGVSVAKEIELECPFENMGAQLVKEVASKTNDDAGDGTTTATILAQSIIGVGLKNVTAGANPMDLKRGIDKAVKAVVTHIAGMAKEVGDDFQKIEHVAKISANGDENIGSLIAEAMRKVKKEGVITVEEAKGTDTTVEVVEGMQFDRGYISPYFVTNTDKMEVQMENPFILIYDKKISVLKEMLPILEQTVQTGKPLLIIAEDIDSEALATLVVNRLRGSLKICAVKAPGFGDRRKAMLEDIAILTGGTVISEETGLKLENATMDMLGTAEKVTVDKDNTTIVNGAGNKEGIASRITQIKAQIENTTSDYDREKLQERLAKLAGGVAVLYVGAASEVEMKEKKDRVEDALSATRAAIEEGTVPGGGTAYIRAIAALEGLKGENEDETTGIEIVKRAIEEPLRQIVANAGKEGAVVVQKVKEGKDDFGYNARTDVFENLYTTGVIDPAKVTRVALENAASIAGMFLTTECVIADKKEDNPAAPAMPGGMGGMGGMM.

Residues 29-32 (TLGP), Lys-50, 86-90 (DGTTT), Gly-415, and Asp-495 contribute to the ATP site.

The protein belongs to the chaperonin (HSP60) family. As to quaternary structure, forms a cylinder of 14 subunits composed of two heptameric rings stacked back-to-back. Interacts with the co-chaperonin GroES.

It localises to the cytoplasm. The enzyme catalyses ATP + H2O + a folded polypeptide = ADP + phosphate + an unfolded polypeptide.. In terms of biological role, together with its co-chaperonin GroES, plays an essential role in assisting protein folding. The GroEL-GroES system forms a nano-cage that allows encapsulation of the non-native substrate proteins and provides a physical environment optimized to promote and accelerate protein folding. The chain is Chaperonin GroEL from Porphyromonas gingivalis (strain ATCC BAA-308 / W83).